Consider the following 327-residue polypeptide: Protein EMSY-LIKE 1 (327 aa).

Positions 1–88 (METQIHQLEQ…HATIQPFDVL (88 aa)) constitute an ENT domain. The stretch at 32–58 (ESLITELRKELRVSDDEHRELLSRVNK) forms a coiled coil. 2 disordered regions span residues 206 to 257 (GHGS…SDDI) and 305 to 327 (ADTS…MPQG). Over residues 214–232 (GNRRGQIHGGRGRGPRIHQ) the composition is skewed to basic residues. Residues 281 to 306 (LELDKAKKMLKEHEQALIAAIARLAD) are a coiled coil. A Phosphoserine modification is found at Ser-308. Basic and acidic residues predominate over residues 318–327 (YSHDHPMPQG).

In terms of assembly, isoform 1 interacts with EDM2 in nucleus.

It localises to the nucleus. In terms of biological role, probably involved in the regulation of chromatin states. Contributes to RPP7-mediated and basal immunity, especially against Hyaloperonospora arabidopsidis isolate Hiks1. Regulates negatively EDM2-dependent floral transition. The sequence is that of Protein EMSY-LIKE 1 from Arabidopsis thaliana (Mouse-ear cress).